A 179-amino-acid polypeptide reads, in one-letter code: Adenine phosphoribosyltransferase (179 aa).

Belongs to the purine/pyrimidine phosphoribosyltransferase family. Homodimer.

It localises to the cytoplasm. It catalyses the reaction AMP + diphosphate = 5-phospho-alpha-D-ribose 1-diphosphate + adenine. It participates in purine metabolism; AMP biosynthesis via salvage pathway; AMP from adenine: step 1/1. Its function is as follows. Catalyzes a salvage reaction resulting in the formation of AMP, that is energically less costly than de novo synthesis. This Actinobacillus pleuropneumoniae serotype 5b (strain L20) protein is Adenine phosphoribosyltransferase.